Here is a 109-residue protein sequence, read N- to C-terminus: Cell division protein ZapA (109 aa).

Residues 22–99 (EQQDALNLAA…IEQALLEQGR (78 aa)) are a coiled coil.

The protein belongs to the ZapA family. Type 1 subfamily. In terms of assembly, homodimer. Interacts with FtsZ.

It is found in the cytoplasm. In terms of biological role, activator of cell division through the inhibition of FtsZ GTPase activity, therefore promoting FtsZ assembly into bundles of protofilaments necessary for the formation of the division Z ring. It is recruited early at mid-cell but it is not essential for cell division. This chain is Cell division protein ZapA, found in Erwinia tasmaniensis (strain DSM 17950 / CFBP 7177 / CIP 109463 / NCPPB 4357 / Et1/99).